We begin with the raw amino-acid sequence, 206 residues long: Small ribosomal subunit protein uS4 (206 aa).

In terms of domain architecture, S4 RNA-binding spans 96 to 156 (GRLDNVVYRM…EKAKKQSRVK (61 aa)).

This sequence belongs to the universal ribosomal protein uS4 family. Part of the 30S ribosomal subunit. Contacts protein S5. The interaction surface between S4 and S5 is involved in control of translational fidelity.

In terms of biological role, one of the primary rRNA binding proteins, it binds directly to 16S rRNA where it nucleates assembly of the body of the 30S subunit. With S5 and S12 plays an important role in translational accuracy. The protein is Small ribosomal subunit protein uS4 of Pectobacterium atrosepticum (strain SCRI 1043 / ATCC BAA-672) (Erwinia carotovora subsp. atroseptica).